The primary structure comprises 224 residues: uncharacterized protein (224 aa).

The presence of the two linear plasmids, termed pGKL1 and pGKL2, in strains of Kluyveromyces lactis confers the killer phenotype to the host cell, by promoting the secretion of a toxin able to inhibit the growth of sensitive strains. This is an uncharacterized protein from Kluyveromyces lactis (strain ATCC 8585 / CBS 2359 / DSM 70799 / NBRC 1267 / NRRL Y-1140 / WM37) (Yeast).